Reading from the N-terminus, the 118-residue chain is Large ribosomal subunit protein uL18 (118 aa).

A disordered region spans residues 1–22 (MISKPDKNKLRQKRHRRVRGKL). Over residues 10–20 (LRQKRHRRVRG) the composition is skewed to basic residues.

It belongs to the universal ribosomal protein uL18 family. Part of the 50S ribosomal subunit; part of the 5S rRNA/L5/L18/L25 subcomplex. Contacts the 5S and 23S rRNAs.

This is one of the proteins that bind and probably mediate the attachment of the 5S RNA into the large ribosomal subunit, where it forms part of the central protuberance. The sequence is that of Large ribosomal subunit protein uL18 from Streptococcus thermophilus (strain ATCC BAA-491 / LMD-9).